We begin with the raw amino-acid sequence, 67 residues long: MSLFPVIVVFGLSFPPIFFELLLSLAIFWLVRRVLVPTGIYDFVWHPALFNTALYCCLFYLISRLFV.

The next 2 membrane-spanning stretches (helical) occupy residues 3 to 23 (LFPV…ELLL) and 43 to 63 (FVWH…YLIS).

The protein belongs to the AaeX family.

The protein resides in the cell membrane. This chain is Protein AaeX, found in Escherichia coli (strain K12 / DH10B).